Consider the following 358-residue polypeptide: MLSIIGFIITISILVFIHEFGHYCIARYFNVKVEEFSIGFGKALIGITDKKGVRWKICLIPLGGYVKIYGYDRSLMDKTKEVNEKVAFDAKSCLERFLIVAAGPLINYLLAIIIFAGFYCYFGKTEIPPIIGNVVASSPAERADLRAGDKIVKVNDKSVKDFGDVQREILINGFSSSTLTIERKSEEFIVNIMPQEIIISPPEEKQVNKKTLRIGIIAKNESIHTKIGILGGLWEAINTTIDMSALTLNAISQMIVGKRSFDEIGGPIAIAKESGKSIAGGTQMYLLFIAMLSVNLGLLNLLPIPVLDGGHLVFILYEAITGKLPHPKTKNILLQLGAIIIIFLIIIAVSNDIQNLFS.

A Zn(2+)-binding site is contributed by histidine 18. Glutamate 19 is a catalytic residue. Histidine 22 is a binding site for Zn(2+). Transmembrane regions (helical) follow at residues 52–71 (GVRW…IYGY), 97–119 (FLIV…AGFY), 285–307 (YLLF…IPVL), and 332–351 (ILLQ…AVSN). Residues 102 to 186 (AGPLINYLLA…STLTIERKSE (85 aa)) enclose the PDZ domain.

The protein belongs to the peptidase M50B family. It depends on Zn(2+) as a cofactor.

Its subcellular location is the cell inner membrane. The protein is Putative zinc metalloprotease RC0203 of Rickettsia conorii (strain ATCC VR-613 / Malish 7).